The primary structure comprises 1099 residues: Sterol regulatory element-binding protein 2 (1099 aa).

The interval Met1–Met47 is transcriptional activation (acidic). Residues Met1–Arg461 are Cytoplasmic-facing. Residues Leu65–Arg107 are disordered. Residues Pro71 to Thr100 are compositionally biased toward low complexity. The 51-residue stretch at Glu320–Leu370 folds into the bHLH domain. The segment at Leu370 to Asn391 is leucine-zipper. The helical transmembrane segment at Leu462–Gly482 threads the bilayer. Over Ala483–Ala513 the chain is Lumenal. Residues Trp514–Trp534 form a helical membrane-spanning segment. Topologically, residues Gly535–Ser1099 are cytoplasmic.

The protein belongs to the SREBP family. In terms of assembly, forms a tight complex with scap, the SCAP-SREBP complex, in the endoplasmic reticulum membrane. Homodimer; efficient DNA binding of the soluble transcription factor fragment requires dimerization with another bHLH protein. In terms of processing, processed in the Golgi apparatus, releasing the protein from the membrane. At low cholesterol the SCAP-SREBP complex is recruited into COPII vesicles for export from the endoplasmic reticulum. In the Golgi, complex SREBPs are cleaved sequentially by site-1 (mbtps1, S1P) and site-2 (mbtps2, S2P) protease. The first cleavage by site-1 protease occurs within the luminal loop, the second cleavage by site-2 protease occurs within the first transmembrane domain, releasing the transcription factor from the Golgi membrane.

It is found in the endoplasmic reticulum membrane. The protein localises to the golgi apparatus membrane. It localises to the cytoplasmic vesicle. The protein resides in the COPII-coated vesicle membrane. Its subcellular location is the nucleus. In terms of biological role, precursor of the transcription factor form (Processed sterol regulatory element-binding protein 2), which is embedded in the endoplasmic reticulum membrane. Low sterol concentrations promote processing of this form, releasing the transcription factor form that translocates into the nucleus and activates transcription of genes involved in cholesterol biosynthesis. Its function is as follows. Key transcription factor that regulates expression of genes involved in cholesterol biosynthesis. Binds to the sterol regulatory element 1 (SRE-1) (5'-ATCACCCCAC-3'). Has dual sequence specificity binding to both an E-box motif (5'-ATCACGTGA-3') and to SRE-1 (5'-ATCACCCCAC-3'). Regulates transcription of genes related to cholesterol synthesis pathway. Activated by mediated cholesterol efflux, transactivates NOTCH and promotes hematopoietic stem and progenitor cell emergence. This chain is Sterol regulatory element-binding protein 2, found in Danio rerio (Zebrafish).